The chain runs to 153 residues: uncharacterized protein (153 aa).

Residues Leu-72 to Ser-98 are disordered.

The protein localises to the cytoplasm. It is found in the nucleus. This is an uncharacterized protein from Schizosaccharomyces pombe (strain 972 / ATCC 24843) (Fission yeast).